Consider the following 705-residue polypeptide: Elongation factor G (705 aa).

One can recognise a tr-type G domain in the interval 8 to 290; sequence ERYRNFGIMA…GVVHLLPSPA (283 aa). GTP is bound by residues 17 to 24, 88 to 92, and 142 to 145; these read AHIDAGKT, DTPGH, and NKMD. The disordered stretch occupies residues 290 to 309; sequence ADRPPVQGIDEDEKEDTRAA.

This sequence belongs to the TRAFAC class translation factor GTPase superfamily. Classic translation factor GTPase family. EF-G/EF-2 subfamily.

The protein resides in the cytoplasm. Functionally, catalyzes the GTP-dependent ribosomal translocation step during translation elongation. During this step, the ribosome changes from the pre-translocational (PRE) to the post-translocational (POST) state as the newly formed A-site-bound peptidyl-tRNA and P-site-bound deacylated tRNA move to the P and E sites, respectively. Catalyzes the coordinated movement of the two tRNA molecules, the mRNA and conformational changes in the ribosome. The protein is Elongation factor G of Xanthomonas axonopodis pv. citri (strain 306).